A 1160-amino-acid polypeptide reads, in one-letter code: DNA polymerase III subunit alpha (1160 aa).

The protein resides in the cytoplasm. The catalysed reaction is DNA(n) + a 2'-deoxyribonucleoside 5'-triphosphate = DNA(n+1) + diphosphate. DNA polymerase III is a complex, multichain enzyme responsible for most of the replicative synthesis in bacteria. This DNA polymerase also exhibits 3' to 5' exonuclease activity. The alpha chain is the DNA polymerase. In Escherichia coli O6:H1 (strain CFT073 / ATCC 700928 / UPEC), this protein is DNA polymerase III subunit alpha (dnaE).